Reading from the N-terminus, the 320-residue chain is Malate dehydrogenase (320 aa).

NAD(+) contacts are provided by residues 10 to 15 and aspartate 34; that span reads GSGMIG. 2 residues coordinate substrate: arginine 83 and arginine 89. NAD(+)-binding positions include asparagine 96 and 119–121; that span reads ITN. Residues asparagine 121 and arginine 152 each contribute to the substrate site. Histidine 176 acts as the Proton acceptor in catalysis.

It belongs to the LDH/MDH superfamily. MDH type 3 family.

It carries out the reaction (S)-malate + NAD(+) = oxaloacetate + NADH + H(+). Functionally, catalyzes the reversible oxidation of malate to oxaloacetate. This Brucella melitensis biotype 1 (strain ATCC 23456 / CCUG 17765 / NCTC 10094 / 16M) protein is Malate dehydrogenase.